The primary structure comprises 194 residues: Protein GrpE 2 (194 aa).

A compositionally biased stretch (basic and acidic residues) spans 1–17; the sequence is MNDIDKHKKETQTESKN. Positions 1-29 are disordered; it reads MNDIDKHKKETQTESKNDLNNTTITQNNV. The span at 18–29 shows a compositional bias: polar residues; the sequence is DLNNTTITQNNV.

This sequence belongs to the GrpE family. As to quaternary structure, homodimer.

It localises to the cytoplasm. Its function is as follows. Participates actively in the response to hyperosmotic and heat shock by preventing the aggregation of stress-denatured proteins, in association with DnaK and GrpE. It is the nucleotide exchange factor for DnaK and may function as a thermosensor. Unfolded proteins bind initially to DnaJ; upon interaction with the DnaJ-bound protein, DnaK hydrolyzes its bound ATP, resulting in the formation of a stable complex. GrpE releases ADP from DnaK; ATP binding to DnaK triggers the release of the substrate protein, thus completing the reaction cycle. Several rounds of ATP-dependent interactions between DnaJ, DnaK and GrpE are required for fully efficient folding. The polypeptide is Protein GrpE 2 (Buchnera aphidicola subsp. Baizongia pistaciae (strain Bp)).